The sequence spans 305 residues: UDP-3-O-acyl-N-acetylglucosamine deacetylase (305 aa).

Zn(2+) contacts are provided by H78, H237, and D241. The active-site Proton donor is the H264.

Belongs to the LpxC family. Zn(2+) is required as a cofactor.

The enzyme catalyses a UDP-3-O-[(3R)-3-hydroxyacyl]-N-acetyl-alpha-D-glucosamine + H2O = a UDP-3-O-[(3R)-3-hydroxyacyl]-alpha-D-glucosamine + acetate. Its pathway is glycolipid biosynthesis; lipid IV(A) biosynthesis; lipid IV(A) from (3R)-3-hydroxytetradecanoyl-[acyl-carrier-protein] and UDP-N-acetyl-alpha-D-glucosamine: step 2/6. Functionally, catalyzes the hydrolysis of UDP-3-O-myristoyl-N-acetylglucosamine to form UDP-3-O-myristoylglucosamine and acetate, the committed step in lipid A biosynthesis. The protein is UDP-3-O-acyl-N-acetylglucosamine deacetylase of Burkholderia multivorans (strain ATCC 17616 / 249).